A 179-amino-acid polypeptide reads, in one-letter code: UPF0398 protein Bsph_0756 (179 aa).

The protein belongs to the UPF0398 family.

The protein is UPF0398 protein Bsph_0756 of Lysinibacillus sphaericus (strain C3-41).